Consider the following 211-residue polypeptide: Imidazole glycerol phosphate synthase subunit HisH (211 aa).

Positions 1–206 (MIGIIDYGRG…GKWVNEDATV (206 aa)) constitute a Glutamine amidotransferase type-1 domain. Catalysis depends on Cys-79, which acts as the Nucleophile. Active-site residues include His-181 and Glu-183.

In terms of assembly, heterodimer of HisH and HisF.

The protein localises to the cytoplasm. The catalysed reaction is 5-[(5-phospho-1-deoxy-D-ribulos-1-ylimino)methylamino]-1-(5-phospho-beta-D-ribosyl)imidazole-4-carboxamide + L-glutamine = D-erythro-1-(imidazol-4-yl)glycerol 3-phosphate + 5-amino-1-(5-phospho-beta-D-ribosyl)imidazole-4-carboxamide + L-glutamate + H(+). It catalyses the reaction L-glutamine + H2O = L-glutamate + NH4(+). It functions in the pathway amino-acid biosynthesis; L-histidine biosynthesis; L-histidine from 5-phospho-alpha-D-ribose 1-diphosphate: step 5/9. IGPS catalyzes the conversion of PRFAR and glutamine to IGP, AICAR and glutamate. The HisH subunit catalyzes the hydrolysis of glutamine to glutamate and ammonia as part of the synthesis of IGP and AICAR. The resulting ammonia molecule is channeled to the active site of HisF. This chain is Imidazole glycerol phosphate synthase subunit HisH, found in Desulfitobacterium hafniense (strain Y51).